We begin with the raw amino-acid sequence, 119 residues long: Ribonuclease P protein component (119 aa).

Belongs to the RnpA family. In terms of assembly, consists of a catalytic RNA component (M1 or rnpB) and a protein subunit.

It catalyses the reaction Endonucleolytic cleavage of RNA, removing 5'-extranucleotides from tRNA precursor.. RNaseP catalyzes the removal of the 5'-leader sequence from pre-tRNA to produce the mature 5'-terminus. It can also cleave other RNA substrates such as 4.5S RNA. The protein component plays an auxiliary but essential role in vivo by binding to the 5'-leader sequence and broadening the substrate specificity of the ribozyme. The protein is Ribonuclease P protein component of Streptococcus pyogenes serotype M1.